The chain runs to 239 residues: Ribonuclease 3 (239 aa).

An RNase III domain is found at 12 to 137 (REKVEAVIGY…LIAAIYLDAG (126 aa)). Glu50 contributes to the Mg(2+) binding site. The active site involves Asp54. Mg(2+)-binding residues include Asp123 and Glu126. Glu126 is an active-site residue. The 70-residue stretch at 162–231 (DAKTELQEWA…ATRLLEREGV (70 aa)) folds into the DRBM domain.

It belongs to the ribonuclease III family. In terms of assembly, homodimer. Requires Mg(2+) as cofactor.

It localises to the cytoplasm. The catalysed reaction is Endonucleolytic cleavage to 5'-phosphomonoester.. Functionally, digests double-stranded RNA. Involved in the processing of primary rRNA transcript to yield the immediate precursors to the large and small rRNAs (23S and 16S). Processes some mRNAs, and tRNAs when they are encoded in the rRNA operon. Processes pre-crRNA and tracrRNA of type II CRISPR loci if present in the organism. The protein is Ribonuclease 3 of Allorhizobium ampelinum (strain ATCC BAA-846 / DSM 112012 / S4) (Agrobacterium vitis (strain S4)).